A 119-amino-acid polypeptide reads, in one-letter code: Protein TusC (119 aa).

It belongs to the DsrF/TusC family. Heterohexamer, formed by a dimer of trimers. The hexameric TusBCD complex contains 2 copies each of TusB, TusC and TusD. The TusBCD complex interacts with TusE.

The protein resides in the cytoplasm. In terms of biological role, part of a sulfur-relay system required for 2-thiolation of 5-methylaminomethyl-2-thiouridine (mnm(5)s(2)U) at tRNA wobble positions. The polypeptide is Protein TusC (Buchnera aphidicola subsp. Baizongia pistaciae (strain Bp)).